The primary structure comprises 282 residues: NH(3)-dependent NAD(+) synthetase (282 aa).

Gly-51–Ser-58 lines the ATP pocket. Asp-57 contributes to the Mg(2+) binding site. Arg-148 is a deamido-NAD(+) binding site. Thr-168 serves as a coordination point for ATP. Glu-173 lines the Mg(2+) pocket. 2 residues coordinate deamido-NAD(+): Lys-181 and Asp-188. Positions 197 and 219 each coordinate ATP. His-268–Lys-269 lines the deamido-NAD(+) pocket.

The protein belongs to the NAD synthetase family. In terms of assembly, homodimer.

The catalysed reaction is deamido-NAD(+) + NH4(+) + ATP = AMP + diphosphate + NAD(+) + H(+). The protein operates within cofactor biosynthesis; NAD(+) biosynthesis; NAD(+) from deamido-NAD(+) (ammonia route): step 1/1. Its function is as follows. Catalyzes the ATP-dependent amidation of deamido-NAD to form NAD. Uses ammonia as a nitrogen source. This is NH(3)-dependent NAD(+) synthetase from Burkholderia cenocepacia (strain HI2424).